The sequence spans 145 residues: Transcriptional regulator MraZ (145 aa).

2 SpoVT-AbrB domains span residues 5 to 50 (TFNH…ALPQ) and 81 to 124 (AHEV…DRAA).

Belongs to the MraZ family. Forms oligomers.

Its subcellular location is the cytoplasm. The protein resides in the nucleoid. This Anaeromyxobacter dehalogenans (strain 2CP-1 / ATCC BAA-258) protein is Transcriptional regulator MraZ.